A 263-amino-acid polypeptide reads, in one-letter code: Acetyl-coenzyme A carboxylase carboxyl transferase subunit beta (263 aa).

Residues 1-263 (MDCPSCKVSY…LKETPKKKKA (263 aa)) enclose the CoA carboxyltransferase N-terminal domain. Zn(2+) is bound by residues Cys3, Cys6, Cys22, and Cys25. The segment at 3 to 25 (CPSCKVSYDEEVFTDNLMVCPHC) adopts a C4-type zinc-finger fold.

It belongs to the AccD/PCCB family. Acetyl-CoA carboxylase is a heterohexamer composed of biotin carboxyl carrier protein (AccB), biotin carboxylase (AccC) and two subunits each of ACCase subunit alpha (AccA) and ACCase subunit beta (AccD). Zn(2+) serves as cofactor.

The protein localises to the cytoplasm. The catalysed reaction is N(6)-carboxybiotinyl-L-lysyl-[protein] + acetyl-CoA = N(6)-biotinyl-L-lysyl-[protein] + malonyl-CoA. It functions in the pathway lipid metabolism; malonyl-CoA biosynthesis; malonyl-CoA from acetyl-CoA: step 1/1. Its function is as follows. Component of the acetyl coenzyme A carboxylase (ACC) complex. Biotin carboxylase (BC) catalyzes the carboxylation of biotin on its carrier protein (BCCP) and then the CO(2) group is transferred by the transcarboxylase to acetyl-CoA to form malonyl-CoA. The protein is Acetyl-coenzyme A carboxylase carboxyl transferase subunit beta of Treponema denticola (strain ATCC 35405 / DSM 14222 / CIP 103919 / JCM 8153 / KCTC 15104).